The sequence spans 302 residues: 4-hydroxy-tetrahydrodipicolinate synthase (302 aa).

Threonine 55 contacts pyruvate. Tyrosine 144 serves as the catalytic Proton donor/acceptor. Residue lysine 172 is the Schiff-base intermediate with substrate of the active site. Residue valine 214 coordinates pyruvate.

This sequence belongs to the DapA family. Homotetramer; dimer of dimers.

Its subcellular location is the cytoplasm. The enzyme catalyses L-aspartate 4-semialdehyde + pyruvate = (2S,4S)-4-hydroxy-2,3,4,5-tetrahydrodipicolinate + H2O + H(+). It participates in amino-acid biosynthesis; L-lysine biosynthesis via DAP pathway; (S)-tetrahydrodipicolinate from L-aspartate: step 3/4. Functionally, catalyzes the condensation of (S)-aspartate-beta-semialdehyde [(S)-ASA] and pyruvate to 4-hydroxy-tetrahydrodipicolinate (HTPA). The chain is 4-hydroxy-tetrahydrodipicolinate synthase from Parasynechococcus marenigrum (strain WH8102).